A 397-amino-acid polypeptide reads, in one-letter code: MRKLTILGATGSIGSSTLAVAAQNPQLFEVVALAAGTNSQKMLELCRIWKPKYAAMASLQAAKELSVLLEKHEISTQVLAGDAGLCQVAALDEIDTVMAAIVGAAGLLPTMAGVKAGKRILLANKEALVMSGQMFIDACEQYGAELLPVDSEHNAIFQCLPADIQRAMGRCDLEEYGISKILLTGSGGPFRYTDIAELASVTPQMAIAHPNWSMGPKISVDSATMMNKGLEYIEARWLFNASREQLQVIIHPQSVIHSMVQYKDGSVLAQMGLPDMQTPIACAMSYPDRVDAGVAPLDFSKIGEFTFLPPDYSRYPCLKLAIDACYDGQAATTALNAANEIAVAAFLNNDIGFTDIAIINEQILNSANMATLVDLESVIELDMQARVLAHNIIRKVA.

The NADPH site is built by Thr-10, Gly-11, Ser-12, Ile-13, Gly-36, Asn-38, and Asn-124. Residue Lys-125 participates in 1-deoxy-D-xylulose 5-phosphate binding. Glu-126 lines the NADPH pocket. Position 150 (Asp-150) interacts with Mn(2+). 1-deoxy-D-xylulose 5-phosphate is bound by residues Ser-151, Glu-152, Ser-186, and His-209. Glu-152 is a binding site for Mn(2+). Gly-215 provides a ligand contact to NADPH. Ser-222, Asn-227, Lys-228, and Glu-231 together coordinate 1-deoxy-D-xylulose 5-phosphate. Glu-231 is a binding site for Mn(2+).

Belongs to the DXR family. It depends on Mg(2+) as a cofactor. Mn(2+) is required as a cofactor.

The catalysed reaction is 2-C-methyl-D-erythritol 4-phosphate + NADP(+) = 1-deoxy-D-xylulose 5-phosphate + NADPH + H(+). Its pathway is isoprenoid biosynthesis; isopentenyl diphosphate biosynthesis via DXP pathway; isopentenyl diphosphate from 1-deoxy-D-xylulose 5-phosphate: step 1/6. Its function is as follows. Catalyzes the NADPH-dependent rearrangement and reduction of 1-deoxy-D-xylulose-5-phosphate (DXP) to 2-C-methyl-D-erythritol 4-phosphate (MEP). The polypeptide is 1-deoxy-D-xylulose 5-phosphate reductoisomerase (Photobacterium profundum (strain SS9)).